Here is a 481-residue protein sequence, read N- to C-terminus: Tripartite motif-containing protein 10 (481 aa).

The segment at 16-61 (CPICQGTLREPVTIDCGHNFCRACLTRYCEIPGPDLEESPTCPLCK) adopts an RING-type zinc-finger fold. Residues 94 to 135 (GEEDVCQEHGEKIYFFCEDDEMQLCVVCREAGEHATHTMRFL) form a B box-type zinc finger. 4 residues coordinate Zn(2+): Cys-99, His-102, Cys-121, and His-127. Residues 150-177 (LKCLRKEREEIQEIQSRENKRMQVLLTQ) adopt a coiled-coil conformation. In terms of domain architecture, B30.2/SPRY spans 292-481 (REMKMFLEKL…GRGSSFSLSS (190 aa)).

It belongs to the TRIM/RBCC family. Interacts with IFNAR1; this interaction prevents association of IFNAR1 with TYK2.

It localises to the cytoplasm. Its function is as follows. E3 ligase that plays an essential role in the differentiation and survival of terminal erythroid cells. May directly bind to PTEN and promote its ubiquitination, resulting in its proteasomal degradation and activation of hypertrophic signaling. In addition, plays a role in immune response regulation by repressing the phosphorylation of STAT1 and STAT2 in the interferon/JAK/STAT signaling pathway independent of its E3 ligase activity. Mechanistically, interacts with the intracellular domain of IFNAR1 and thereby inhibits the association between TYK2 and IFNAR1. This is Tripartite motif-containing protein 10 (TRIM10) from Homo sapiens (Human).